Here is a 129-residue protein sequence, read N- to C-terminus: UPF0344 protein MW0851 (129 aa).

4 helical membrane-spanning segments follow: residues 1 to 21 (MLHL…ATYL), 36 to 56 (LHMI…WILI), 67 to 87 (MLLT…EVSI), and 99 to 119 (MFWI…ILPL).

The protein belongs to the UPF0344 family.

It localises to the cell membrane. The protein is UPF0344 protein MW0851 of Staphylococcus aureus (strain MW2).